The following is a 142-amino-acid chain: Large ribosomal subunit protein mL43 (142 aa).

This sequence belongs to the mitochondrion-specific ribosomal protein mL43 family. Component of the mitochondrial large ribosomal subunit. Mature mitochondrial ribosomes consist of a small (37S) and a large (54S) subunit. The 37S subunit contains at least 33 different proteins and 1 molecule of RNA (15S). The 54S subunit contains at least 45 different proteins and 1 molecule of RNA (21S).

Its subcellular location is the mitochondrion. The protein is Large ribosomal subunit protein mL43 (MRPL51) of Eremothecium gossypii (strain ATCC 10895 / CBS 109.51 / FGSC 9923 / NRRL Y-1056) (Yeast).